Reading from the N-terminus, the 608-residue chain is Serine/arginine repetitive matrix protein 4 (608 aa).

Disordered regions lie at residues 34–246 (ASIT…PLPR) and 261–608 (SAAD…STRR). Over residues 78–100 (GREKACRELDPARAHSASQDRDP) the composition is skewed to basic and acidic residues. 2 stretches are compositionally biased toward basic residues: residues 107–123 (RGKK…RRRS) and 131–187 (VKKK…HRCP). Over residues 188–200 (SRSQSSELRSPSC) the composition is skewed to low complexity. Residues 201-213 (ESRHRGRSPEEGR) are compositionally biased toward basic and acidic residues. Residues 214–228 (KSRRTHSRRCSKNHC) show a composition bias toward basic residues. The segment covering 289 to 299 (TSSPPSTQTSS) has biased composition (low complexity). The span at 322 to 339 (CGNTSDSGNSFTTSSPQN) shows a compositional bias: polar residues. Low complexity-rich tracts occupy residues 389–420 (RSSS…SRST) and 428–459 (SRSP…SRYS). Over residues 460–477 (PSRERDLKYGEKEPQPRE) the composition is skewed to basic and acidic residues. Basic residues predominate over residues 478–494 (RARRRRRSYSPMRKRRR). Over residues 495–504 (DSPSHLEARR) the composition is skewed to basic and acidic residues. A compositionally biased stretch (low complexity) spans 518–555 (PSPSSSSSLSSASSWYSSSSSSSSSSSRSPSRSYSRSR). Residues 556 to 573 (SPSRSHSSRSQTRSRTRT) show a composition bias toward basic residues. The segment covering 574–608 (SRSSSSRSLSLGSRSRSRNRSLSYSSAESYASTRR) has biased composition (low complexity).

This sequence belongs to the nSR100 family. Post-translationally, phosphorylated. As to expression, specifically expressed in neuronal cells (at protein level). Expressed in adult nervous system and sensory organ tissues.

The protein resides in the nucleus. Its function is as follows. Splicing factor specifically required for neural cell differentiation. Acts in conjunction with nPTB/PTBP2 by binding directly to its regulated target transcripts and promotes neural-specific exon inclusion in many genes that function in neural cell differentiation. Required to promote the inclusion of neural-specific exon 10 in nPTB/PTBP2, leading to increased expression of neural-specific nPTB/PTBP2. Also promotes the inclusion of exon 16 in DAAM1 in neuron extracts. Promotes alternative splicing of REST transcripts to produce REST isoform 2 (REST4) with greatly reduced repressive activity, thereby activating expression of REST targets in neural cells. Plays an important role during embryonic development as well as in the proper functioning of the adult nervous system. Regulates alternative splicing events in genes with important neuronal functions. This chain is Serine/arginine repetitive matrix protein 4 (Srrm4), found in Mus musculus (Mouse).